Reading from the N-terminus, the 660-residue chain is MKTVVFAYHDMGCLGIEALLAAGYEISAIFTHTDNPGEKAFYGSVARLAAERGIPVYAPDNVNHPLWVERIAQLSPDVIFSFYYRHLIYDEILQLAPAGAFNLHGSLLPKYRGRAPLNWVLVNGETETGVTLHRMVKRADAGAIVAQLRIAIAPDDIAITLHHKLCHAARQLLEQTLPAIKHGNILEIAQRENEATCFGRRTPDDSFLEWHKPASVLHNMVRAVADPWPGAFSYVGNQKFTVWSSRVHPHASKAQPGSVISVAPLLIACGDGALEIVTGQAGDGITMQGSQLAQTLGLVQGSRLNSQPACTARRRTRVLILGVNGFIGNHLTERLLREDHYEVYGLDIGSDAISRFLNHPHFHFVEGDISIHSEWIEYHVKKCDVVLPLVAIATPIEYTRNPLRVFELDFEENLRIIRYCVKYRKRIIFPSTSEVYGMCSDKYFDEDHSNLIVGPVNKPRWIYSVSKQLLDRVIWAYGEKEGLQFTLFRPFNWMGPRLDNLNAARIGSSRAITQLILNLVEGSPIKLIDGGKQKRCFTDIRDGIEALYRIIENAGNRCDGEIINIGNPENEASIEELGEMLLASFEKHPLRHHFPPFAGFRVVESSSYYGKGYQDVEHRKPSIRNAHRCLDWEPKIDMQETIDETLDFFLRTVDLTDKPS.

A formyltransferase ArnAFT region spans residues 1 to 304 (MKTVVFAYHD…TLGLVQGSRL (304 aa)). 86–88 (HLI) contributes to the (6R)-10-formyltetrahydrofolate binding site. The active-site Proton donor; for formyltransferase activity is His104. Residues Arg114 and 136–140 (VKRAD) each bind (6R)-10-formyltetrahydrofolate. The dehydrogenase ArnADH stretch occupies residues 314–660 (RRTRVLILGV…RTVDLTDKPS (347 aa)). Residues Asp347 and 368–369 (DI) each bind NAD(+). Residues Ala393, Tyr398, and 432–433 (TS) contribute to the UDP-alpha-D-glucuronate site. The active-site Proton acceptor; for decarboxylase activity is Glu434. UDP-alpha-D-glucuronate contacts are provided by residues Arg460, Asn492, 526 to 535 (KLIDGGKQKR), and Tyr613. Residue Arg619 is the Proton donor; for decarboxylase activity of the active site.

It in the N-terminal section; belongs to the Fmt family. UDP-L-Ara4N formyltransferase subfamily. In the C-terminal section; belongs to the NAD(P)-dependent epimerase/dehydratase family. UDP-glucuronic acid decarboxylase subfamily. As to quaternary structure, homohexamer, formed by a dimer of trimers.

It carries out the reaction UDP-alpha-D-glucuronate + NAD(+) = UDP-beta-L-threo-pentopyranos-4-ulose + CO2 + NADH. It catalyses the reaction UDP-4-amino-4-deoxy-beta-L-arabinose + (6R)-10-formyltetrahydrofolate = UDP-4-deoxy-4-formamido-beta-L-arabinose + (6S)-5,6,7,8-tetrahydrofolate + H(+). The protein operates within nucleotide-sugar biosynthesis; UDP-4-deoxy-4-formamido-beta-L-arabinose biosynthesis; UDP-4-deoxy-4-formamido-beta-L-arabinose from UDP-alpha-D-glucuronate: step 1/3. It participates in nucleotide-sugar biosynthesis; UDP-4-deoxy-4-formamido-beta-L-arabinose biosynthesis; UDP-4-deoxy-4-formamido-beta-L-arabinose from UDP-alpha-D-glucuronate: step 3/3. Its pathway is bacterial outer membrane biogenesis; lipopolysaccharide biosynthesis. Its function is as follows. Bifunctional enzyme that catalyzes the oxidative decarboxylation of UDP-glucuronic acid (UDP-GlcUA) to UDP-4-keto-arabinose (UDP-Ara4O) and the addition of a formyl group to UDP-4-amino-4-deoxy-L-arabinose (UDP-L-Ara4N) to form UDP-L-4-formamido-arabinose (UDP-L-Ara4FN). The modified arabinose is attached to lipid A and is required for resistance to polymyxin and cationic antimicrobial peptides. The polypeptide is Bifunctional polymyxin resistance protein ArnA (Escherichia coli (strain K12 / MC4100 / BW2952)).